The chain runs to 511 residues: 2'-acyl-2-O-sulfo-trehalose (hydroxy)phthioceranyltransferase PapA1 (511 aa).

The protein belongs to the PapA acyltransferase family.

The catalysed reaction is a (hydroxy)phthioceranyl-[(hydroxy)phthioceranic acid synthase] + 2'-palmitoyl/stearoyl-2-O-sulfo-alpha,alpha-trehalose = a 3'-(hydroxy)phthioceranyl-2'-palmitoyl/stearoyl-2-O-sulfo-alpha,alpha-trehalose + holo-[(hydroxy)phthioceranic acid synthase].. Functionally, required for the biosynthesis of sulfolipid-1 (SL-1), a major mycobacterial cell wall lipid. Catalyzes the acylation of trehalose-2-sulfate-2'-palmitate (SL659) by adding the (hydroxy)phthioceranoyl group at the 3'-position to yield the diacylated intermediate 2-palmitoyl-3-(C43)-phthioceranyl-alpha, alpha'-D-trehalose-2'-sulfate (SL1278). This is 2'-acyl-2-O-sulfo-trehalose (hydroxy)phthioceranyltransferase PapA1 (papA1) from Mycobacterium tuberculosis (strain CDC 1551 / Oshkosh).